Here is a 364-residue protein sequence, read N- to C-terminus: Nucleosome assembly protein 1;2 (364 aa).

Residues Val32–Glu86 adopt a coiled-coil conformation. Positions Leu53 to Gln68 match the Nuclear export signal motif. Residues Lys227–Lys232 carry the Nuclear localization signal motif. Disordered regions lie at residues Phe250–Thr269 and Gly301–Gln364. Acidic residues-rich tracts occupy residues Pro259–Thr269 and Ala304–Asp340. A Cysteine methyl ester modification is found at Cys361. Residue Cys361 is the site of S-farnesyl cysteine attachment. Residues Lys362 to Gln364 constitute a propeptide, removed in mature form.

This sequence belongs to the nucleosome assembly protein (NAP) family. In terms of assembly, binds preferentially histone H1 in vitro. In terms of tissue distribution, highly expressed in tissues exhibiting active cell-division activities, such as root and shoot meristems and young flowers.

The protein resides in the nucleus. Its subcellular location is the cytoplasm. May modulate chromatin structure by regulation of nucleosome assembly/disassembly. This Oryza sativa subsp. indica (Rice) protein is Nucleosome assembly protein 1;2 (NAP1;2).